The sequence spans 231 residues: 7-cyano-7-deazaguanine synthase (231 aa).

8–18 (LSGGLDSATAA) contacts ATP. Positions 189, 197, 200, and 203 each coordinate Zn(2+).

Belongs to the QueC family. Zn(2+) is required as a cofactor.

The catalysed reaction is 7-carboxy-7-deazaguanine + NH4(+) + ATP = 7-cyano-7-deazaguanine + ADP + phosphate + H2O + H(+). It functions in the pathway purine metabolism; 7-cyano-7-deazaguanine biosynthesis. Its function is as follows. Catalyzes the ATP-dependent conversion of 7-carboxy-7-deazaguanine (CDG) to 7-cyano-7-deazaguanine (preQ(0)). The sequence is that of 7-cyano-7-deazaguanine synthase from Synechococcus elongatus (strain ATCC 33912 / PCC 7942 / FACHB-805) (Anacystis nidulans R2).